Reading from the N-terminus, the 597-residue chain is C4b-binding protein alpha chain (597 aa).

The signal sequence occupies residues 1–48 (MHPPKTPSGALHRKRKMAAWPFSRLWKVSDPILFQMTLIAALLPAVLG). 8 consecutive Sushi domains span residues 49–110 (NCGP…FCIY), 111–172 (KRCR…QCEI), 173–236 (VKCK…TCEK), 237–296 (ITCR…ACEP), 297–362 (NSCI…GCEA), 363–424 (LCCP…SCGD), 425–482 (ICNF…QCKA), and 483–540 (LCRK…KCEW). Intrachain disulfides connect C50–C96, C81–C108, C113–C154, C140–C170, C175–C217, C203–C234, C239–C281, C267–C294, C299–C348, C332–C360, C365–C409, C399–C422, C426–C468, C454–C480, C484–C525, and C511–C538. A glycan (N-linked (GlcNAc...) asparagine) is linked at N221. N-linked (GlcNAc...) asparagine glycosylation is found at N506 and N528.

In terms of assembly, disulfide-linked complex of alpha and beta chains of 3 possible sorts: a 570 kDa complex of 7 alpha chains and 1 beta chain, a 530 kDa homoheptamer of alpha chains or a 500 kDa complex of 6 alpha chains and 1 beta chain. The central body of the alpha chain homomer supports tentacles, each with the binding site for C4b at the end. As to quaternary structure, (Microbial infection) Interacts with Staphylococcus aureus protein SdrE; this interaction inhibits complement-mediated bacterial opsonization. Chylomicrons in the plasma.

It localises to the secreted. Functionally, controls the classical pathway of complement activation. It binds as a cofactor to C3b/C4b inactivator (C3bINA), which then hydrolyzes the complement fragment C4b. It also accelerates the degradation of the C4bC2a complex (C3 convertase) by dissociating the complement fragment C2a. Alpha chain binds C4b. It also interacts with anticoagulant protein S and with serum amyloid P component. This is C4b-binding protein alpha chain (C4BPA) from Homo sapiens (Human).